A 93-amino-acid polypeptide reads, in one-letter code: HIG1 domain family member 1A, mitochondrial (93 aa).

Ser-2 carries the N-acetylserine modification. The region spanning 2–93 (STNTDLSLSS…YQEFWAKRKP (92 aa)) is the HIG1 domain. The residue at position 8 (Ser-8) is a Phosphoserine. Helical transmembrane passes span 28–48 (PFVP…LYKL) and 69–89 (GFVV…EFWA). Residues 90 to 93 (KRKP) lie on the Mitochondrial matrix side of the membrane.

As to quaternary structure, associates with cytochrome c oxidase (COX, complex IV); proposed complex component. Also associates with respiratory chain supercomplexes. In terms of tissue distribution, expressed in brain and spinal cord.

It localises to the mitochondrion membrane. The protein localises to the mitochondrion inner membrane. Proposed subunit of cytochrome c oxidase (COX, complex IV), which is the terminal component of the mitochondrial respiratory chain that catalyzes the reduction of oxygen to water. May play a role in the assembly of respiratory supercomplexes. This is HIG1 domain family member 1A, mitochondrial (Higd1a) from Rattus norvegicus (Rat).